A 64-amino-acid polypeptide reads, in one-letter code: Putative antitoxin VapB51 (64 aa).

In terms of biological role, possibly the antitoxin component of a type II toxin-antitoxin (TA) system. Its cognate toxin is VapC51. The polypeptide is Putative antitoxin VapB51 (Mycobacterium tuberculosis (strain ATCC 25618 / H37Rv)).